We begin with the raw amino-acid sequence, 560 residues long: Kinesin light chain 1 (560 aa).

Residues 27-156 (KTKQVIQGLE…HLEFMNQLKK (130 aa)) adopt a coiled-coil conformation. Residues 156 to 176 (KYDDDISPSEDKDSDSSKEPL) show a composition bias toward basic and acidic residues. The segment at 156-203 (KYDDDISPSEDKDSDSSKEPLDDLFPNDEDDPGQGIQQQHSSAAAAAQ) is disordered. Ser162 is modified (phosphoserine). Residues 188–203 (GQGIQQQHSSAAAAAQ) show a composition bias toward low complexity. TPR repeat units follow at residues 213 to 246 (LRTL…LEKT), 255 to 288 (ATML…REKT), 297 to 330 (AATL…REKV), 339 to 372 (AKQL…YQTK), and 381 to 414 (AKTK…AHER). The residue at position 449 (Tyr449) is a Phosphotyrosine. At Ser460 the chain carries Phosphoserine. The TPR 6 repeat unit spans residues 464–497 (TTTLKNLGALYRRQGKFEAAETLEEAALRSRKQG). Phosphoserine is present on residues Ser521 and Ser524.

This sequence belongs to the kinesin light chain family. As to quaternary structure, oligomeric complex composed of two heavy chains and two light chains. Interacts with SPAG9. Interacts with ATCAY; may link mitochondria to KLC1 and regulate mitochondria localization into neuron projections. Interacts (via TPR repeats) with TOR1A; the interaction associates TOR1A with the kinesin oligomeric complex. Interacts with BORCS5. Interacts with MAPK8IP3/JIP3 and NTRK2/TRKB; interaction with NTRK2/TRKB is mediated by MAPK8IP3/JIP3. Interacts with CLSTN1; phosphorylation at Ser-460 inhibits interaction with CLSTN1. Post-translationally, phosphorylation at Ser-460 by ERK inhibits interaction with CLSTN1 and localization to cytoplasmic vesicles. In terms of tissue distribution, expressed in brain (at protein level).

Its subcellular location is the cell projection. It localises to the growth cone. The protein resides in the cytoplasmic vesicle. The protein localises to the cytoplasm. It is found in the cytoskeleton. In terms of biological role, kinesin is a microtubule-associated force-producing protein that may play a role in organelle transport. The light chain may function in coupling of cargo to the heavy chain or in the modulation of its ATPase activity. The chain is Kinesin light chain 1 (Klc1) from Rattus norvegicus (Rat).